Consider the following 180-residue polypeptide: Large ribosomal subunit protein uL5 (180 aa).

This sequence belongs to the universal ribosomal protein uL5 family. Part of the 50S ribosomal subunit; part of the 5S rRNA/L5/L18/L25 subcomplex. Contacts the 5S rRNA and the P site tRNA. Forms a bridge to the 30S subunit in the 70S ribosome.

This is one of the proteins that bind and probably mediate the attachment of the 5S RNA into the large ribosomal subunit, where it forms part of the central protuberance. In the 70S ribosome it contacts protein S13 of the 30S subunit (bridge B1b), connecting the 2 subunits; this bridge is implicated in subunit movement. Contacts the P site tRNA; the 5S rRNA and some of its associated proteins might help stabilize positioning of ribosome-bound tRNAs. This Symbiobacterium thermophilum (strain DSM 24528 / JCM 14929 / IAM 14863 / T) protein is Large ribosomal subunit protein uL5.